A 451-amino-acid chain; its full sequence is UDP-N-acetylmuramoylalanine--D-glutamate ligase (451 aa).

An ATP-binding site is contributed by 119–125 (GSNGKTT).

The protein belongs to the MurCDEF family.

It localises to the cytoplasm. It catalyses the reaction UDP-N-acetyl-alpha-D-muramoyl-L-alanine + D-glutamate + ATP = UDP-N-acetyl-alpha-D-muramoyl-L-alanyl-D-glutamate + ADP + phosphate + H(+). It participates in cell wall biogenesis; peptidoglycan biosynthesis. In terms of biological role, cell wall formation. Catalyzes the addition of glutamate to the nucleotide precursor UDP-N-acetylmuramoyl-L-alanine (UMA). This is UDP-N-acetylmuramoylalanine--D-glutamate ligase from Streptococcus agalactiae serotype III (strain NEM316).